The sequence spans 154 residues: Ribosome maturation factor RimP (154 aa).

The protein belongs to the RimP family.

It is found in the cytoplasm. Functionally, required for maturation of 30S ribosomal subunits. This chain is Ribosome maturation factor RimP, found in Clostridium kluyveri (strain ATCC 8527 / DSM 555 / NBRC 12016 / NCIMB 10680 / K1).